We begin with the raw amino-acid sequence, 877 residues long: Alanine--tRNA ligase (877 aa).

The Zn(2+) site is built by His567, His571, Cys669, and His673.

The protein belongs to the class-II aminoacyl-tRNA synthetase family. Zn(2+) serves as cofactor.

Its subcellular location is the cytoplasm. It catalyses the reaction tRNA(Ala) + L-alanine + ATP = L-alanyl-tRNA(Ala) + AMP + diphosphate. In terms of biological role, catalyzes the attachment of alanine to tRNA(Ala) in a two-step reaction: alanine is first activated by ATP to form Ala-AMP and then transferred to the acceptor end of tRNA(Ala). Also edits incorrectly charged Ser-tRNA(Ala) and Gly-tRNA(Ala) via its editing domain. This is Alanine--tRNA ligase from Rickettsia typhi (strain ATCC VR-144 / Wilmington).